The following is a 273-amino-acid chain: Phosphate import ATP-binding protein PstB (273 aa).

The 240-residue stretch at 19–258 (LSLQNVTISY…FNDTDKIFNA (240 aa)) folds into the ABC transporter domain. Residue 51-58 (GPSGCGKS) participates in ATP binding.

The protein belongs to the ABC transporter superfamily. Phosphate importer (TC 3.A.1.7) family. In terms of assembly, the complex is composed of two ATP-binding proteins (PstB), two transmembrane proteins (PstC and PstA) and a solute-binding protein (PstS).

It localises to the cell inner membrane. The enzyme catalyses phosphate(out) + ATP + H2O = ADP + 2 phosphate(in) + H(+). Part of the ABC transporter complex PstSACB involved in phosphate import. Responsible for energy coupling to the transport system. The sequence is that of Phosphate import ATP-binding protein PstB from Synechococcus sp. (strain CC9605).